Reading from the N-terminus, the 225-residue chain is Ethylene-responsive transcription factor 3 (225 aa).

Positions 1-12 (MRRGRAAAAPAP) are enriched in low complexity. Disordered regions lie at residues 1–29 (MRRG…IRFR) and 82–193 (NFPL…NIAS). The AP2/ERF DNA-binding region spans 27 to 84 (RFRGVRKRPWGRFAAEIRDPWKKTRVWLGTFDSAEDAARAYDAAARALRGPKAKTNFP). Over residues 118 to 134 (SQRPTSSSMSSTVESFS) the composition is skewed to low complexity. Residues 176–185 (DHGDCEKEND) are compositionally biased toward basic and acidic residues. Residues 202–208 (FDLNLPP) carry the EAR-like (transcriptional repression) motif.

Belongs to the ethylene-response factor family. Class 2 subfamily.

The protein localises to the nucleus. Transcription factor that binds to the GCC-box pathogenesis-related promoter element. Involved in the regulation of gene expression by stress factors and by components of stress signal transduction pathways. Probably acts as a transcriptional repressor and may regulate other AtERFs. The sequence is that of Ethylene-responsive transcription factor 3 (ERF3) from Nicotiana tabacum (Common tobacco).